A 59-amino-acid polypeptide reads, in one-letter code: Large ribosomal subunit protein uL30 (59 aa).

This sequence belongs to the universal ribosomal protein uL30 family. As to quaternary structure, part of the 50S ribosomal subunit.

This is Large ribosomal subunit protein uL30 from Aliivibrio salmonicida (strain LFI1238) (Vibrio salmonicida (strain LFI1238)).